A 259-amino-acid polypeptide reads, in one-letter code: MQCTRAVARLAGGLARTAWATQHTYKHRPAILGLLEQPCRLCSSTGVVDNTNKTKPGTAEAAEGGILKRVLNKVGFTPNTKARLKVTSHLLYESVADKINYVTFFRDFNLPNTFNSWFLVTELHVWLLLMRSMAEGSETGEDGRFLRNCIVEAMWGDVNTRAKKLGAHNPSRTRQQIETLSEQFQAALIAYDEGIMSDDRVLACALWRRFFEMNCDDYAQIERLVKYVRQQASMLDSLPRDQFIVKPKVAWLELDKCKV.

It belongs to the CBP3 family. As to quaternary structure, interacts with sloth1; the interaction is probably involved in the assembly and stability of the mitochondrial ubiquinol-cytochrome c reductase complex.

The protein localises to the mitochondrion inner membrane. In terms of biological role, required for the assembly of the ubiquinol-cytochrome c reductase complex (mitochondrial respiratory chain complex III or cytochrome b-c1 complex). May be involved in cytochrome b translation and/or stability. The protein is Ubiquinol-cytochrome c reductase complex assembly factor 1 of Drosophila melanogaster (Fruit fly).